The following is an 835-amino-acid chain: Leucine--tRNA ligase (835 aa).

A 'HIGH' region motif is present at residues 44–54 (PYPSGNIHMGH). Positions 587–591 (KMSKS) match the 'KMSKS' region motif. Lys-590 provides a ligand contact to ATP.

It belongs to the class-I aminoacyl-tRNA synthetase family.

The protein resides in the cytoplasm. It catalyses the reaction tRNA(Leu) + L-leucine + ATP = L-leucyl-tRNA(Leu) + AMP + diphosphate. This Lawsonia intracellularis (strain PHE/MN1-00) protein is Leucine--tRNA ligase.